The following is a 1025-amino-acid chain: Multidrug resistance protein MdtC (1025 aa).

Transmembrane regions (helical) follow at residues 3-23 (FFALFIYRPVATILLSVAITL), 333-353 (EVEQTLIISVALVILVVFLFL), 360-380 (IIPAVAVPVSLIGTFAAMYLC), 387-407 (LSLMALTIATGFVVDDAIVVL), 431-451 (VGFTVLSMSLSLVAVFLPLLL), 463-483 (FAVTLSVAIGISLLVSLTLTP), 528-548 (LVGVVLLGTIALNIWLYISIP), 853-873 (VILIIAAIATVYIVLGILYES), 875-895 (VHPLTILSTLPSAGVGALLAL), 897-917 (LFNAPFSLIALIGIMLLIGIV), 953-973 (PIMMTTLAALFGALPLVLSGG), and 984-1004 (ITIVGGLVMSQLLTLYTTPVV).

The protein belongs to the resistance-nodulation-cell division (RND) (TC 2.A.6) family. MdtC subfamily. As to quaternary structure, part of a tripartite efflux system composed of MdtA, MdtB and MdtC. MdtC forms a heteromultimer with MdtB.

The protein localises to the cell inner membrane. In terms of biological role, the MdtABC tripartite complex confers resistance against novobiocin and deoxycholate. This chain is Multidrug resistance protein MdtC, found in Escherichia coli O1:K1 / APEC.